The chain runs to 1080 residues: Carbamoyl phosphate synthase large chain (1080 aa).

The carboxyphosphate synthetic domain stretch occupies residues 1–403; sequence MPKRTDLRTI…SLQKAVRGLE (403 aa). ATP-binding residues include Arg129, Arg169, Gly175, Gly176, Glu208, Val210, Glu215, Gly241, Val242, His243, Gln285, and Glu299. Positions 133-328 constitute an ATP-grasp 1 domain; it reads RVAMQEIGLE…IAKIAAKLAV (196 aa). Gln285, Glu299, and Asn301 together coordinate Mg(2+). 3 residues coordinate Mn(2+): Gln285, Glu299, and Asn301. Residues 404-554 are oligomerization domain; sequence TGKVGLEPTG…YSTYEEECEA (151 aa). The tract at residues 555-942 is carbamoyl phosphate synthetic domain; that stretch reads APSDRRKIMI…AFARAQEAGD (388 aa). One can recognise an ATP-grasp 2 domain in the interval 679–876; sequence QKLVQQLGLR…LAKIAARCMT (198 aa). The ATP site is built by Arg715, Arg754, Leu756, Glu761, Gly787, Val788, His789, Ser790, Gln830, and Glu847. Gln830, Glu847, and Asn849 together coordinate Mg(2+). The Mn(2+) site is built by Gln830, Glu847, and Asn849. Residues 943-1080 form the MGS-like domain; it reads IRAPQPGRAF…LQELHKELQV (138 aa). The tract at residues 943–1080 is allosteric domain; it reads IRAPQPGRAF…LQELHKELQV (138 aa).

This sequence belongs to the CarB family. In terms of assembly, composed of two chains; the small (or glutamine) chain promotes the hydrolysis of glutamine to ammonia, which is used by the large (or ammonia) chain to synthesize carbamoyl phosphate. Tetramer of heterodimers (alpha,beta)4. Mg(2+) is required as a cofactor. Mn(2+) serves as cofactor.

It catalyses the reaction hydrogencarbonate + L-glutamine + 2 ATP + H2O = carbamoyl phosphate + L-glutamate + 2 ADP + phosphate + 2 H(+). The enzyme catalyses hydrogencarbonate + NH4(+) + 2 ATP = carbamoyl phosphate + 2 ADP + phosphate + 2 H(+). The protein operates within amino-acid biosynthesis; L-arginine biosynthesis; carbamoyl phosphate from bicarbonate: step 1/1. It functions in the pathway pyrimidine metabolism; UMP biosynthesis via de novo pathway; (S)-dihydroorotate from bicarbonate: step 1/3. Large subunit of the glutamine-dependent carbamoyl phosphate synthetase (CPSase). CPSase catalyzes the formation of carbamoyl phosphate from the ammonia moiety of glutamine, carbonate, and phosphate donated by ATP, constituting the first step of 2 biosynthetic pathways, one leading to arginine and/or urea and the other to pyrimidine nucleotides. The large subunit (synthetase) binds the substrates ammonia (free or transferred from glutamine from the small subunit), hydrogencarbonate and ATP and carries out an ATP-coupled ligase reaction, activating hydrogencarbonate by forming carboxy phosphate which reacts with ammonia to form carbamoyl phosphate. The sequence is that of Carbamoyl phosphate synthase large chain from Xylella fastidiosa (strain 9a5c).